Here is a 598-residue protein sequence, read N- to C-terminus: Inactive metallocarboxypeptidase ECM14 (598 aa).

The first 21 residues, 1–21, serve as a signal peptide directing secretion; the sequence is MRLFTHGQVLALLAFVNTISA. Positions 22–174 are excised as a propeptide; the sequence is IPSFSTNSYP…QTIYESYPSP (153 aa). The 321-residue stretch at 202–522 folds into the Peptidase M14 domain; it reads NYQPLSVIVP…NAVMMLGRFL (321 aa). His264 and Glu267 together coordinate Zn(2+). Substrate is bound by residues 264 to 267, Arg322, and 339 to 340; these read HARE and DR. The cysteines at positions 333 and 356 are disulfide-linked. Residue Asn349 is glycosylated (N-linked (GlcNAc...) asparagine). Residue His396 coordinates Zn(2+). 397 to 398 contacts substrate; that stretch reads SY. Positions 539 to 598 are disordered; sequence QRPNKDDKPILNDDDDDDDADTNDDGIGRKDDSWIPDEYKGDNDRDESDGGWAFRRLRKR. A compositionally biased stretch (acidic residues) spans 550–562; sequence NDDDDDDDADTND. Residues 564-581 show a composition bias toward basic and acidic residues; that stretch reads GIGRKDDSWIPDEYKGDN.

The protein belongs to the peptidase M14 family. Zn(2+) serves as cofactor.

The protein resides in the vacuole. It localises to the secreted. Inactive carboxypeptidase that may play a role in cell wall organization and biogenesis. This chain is Inactive metallocarboxypeptidase ECM14 (ECM14), found in Ajellomyces capsulatus (strain H143) (Darling's disease fungus).